Consider the following 503-residue polypeptide: Maturase K (503 aa).

This sequence belongs to the intron maturase 2 family. MatK subfamily.

Its subcellular location is the plastid. It localises to the chloroplast. Functionally, usually encoded in the trnK tRNA gene intron. Probably assists in splicing its own and other chloroplast group II introns. The chain is Maturase K from Liquidambar styraciflua (Sweetgum tree).